The primary structure comprises 739 residues: Photosystem I P700 chlorophyll a apoprotein A1 (739 aa).

8 consecutive transmembrane segments (helical) span residues 61–84, 147–170, 186–210, 281–299, 336–359, 375–401, 423–445, and 520–538; these read IFSA…FHGA, LYVT…FHYH, MNHH…HVSL, VAHH…GHMY, WHAQ…HHMY, LSLF…IFMV, AIIS…LYIH, and FMVH…LILL. Residues cysteine 562 and cysteine 571 each coordinate [4Fe-4S] cluster. Helical transmembrane passes span 578–599 and 653–675; these read HVFL…HFSW and LSAY…MFLF. Histidine 664 lines the chlorophyll a' pocket. Chlorophyll a contacts are provided by methionine 672 and tyrosine 680. Tryptophan 681 lines the phylloquinone pocket. A helical membrane pass occupies residues 713 to 733; sequence AVGVAHYLLGGIVTTWAFFLA.

It belongs to the PsaA/PsaB family. The PsaA/B heterodimer binds the P700 chlorophyll special pair and subsequent electron acceptors. PSI consists of a core antenna complex that captures photons, and an electron transfer chain that converts photonic excitation into a charge separation. The cyanobacterial PSI reaction center is composed of one copy each of PsaA,B,C,D,E,F,I,J,K,L,M and X, and forms trimeric complexes. Requires PSI electron transfer chain: 5 chlorophyll a, 1 chlorophyll a', 2 phylloquinones and 3 4Fe-4S clusters. PSI core antenna: 90 chlorophyll a, 22 carotenoids, 3 phospholipids and 1 galactolipid. P700 is a chlorophyll a/chlorophyll a' dimer, A0 is one or more chlorophyll a, A1 is one or both phylloquinones and FX is a shared 4Fe-4S iron-sulfur center. as cofactor.

The protein resides in the cellular thylakoid membrane. It carries out the reaction reduced [plastocyanin] + hnu + oxidized [2Fe-2S]-[ferredoxin] = oxidized [plastocyanin] + reduced [2Fe-2S]-[ferredoxin]. Its function is as follows. PsaA and PsaB bind P700, the primary electron donor of photosystem I (PSI), as well as the electron acceptors A0, A1 and FX. PSI is a plastocyanin/cytochrome c6-ferredoxin oxidoreductase, converting photonic excitation into a charge separation, which transfers an electron from the donor P700 chlorophyll pair to the spectroscopically characterized acceptors A0, A1, FX, FA and FB in turn. Oxidized P700 is reduced on the lumenal side of the thylakoid membrane by plastocyanin or cytochrome c6. This chain is Photosystem I P700 chlorophyll a apoprotein A1, found in Picosynechococcus sp. (strain ATCC 27264 / PCC 7002 / PR-6) (Agmenellum quadruplicatum).